A 210-amino-acid polypeptide reads, in one-letter code: Na(+)-translocating NADH-quinone reductase subunit D (210 aa).

The next 6 helical transmembrane spans lie at 14–34, 42–62, 72–92, 96–116, 131–151, and 178–198; these read PIIN…ALAV, LVMS…ISLI, IIVQ…VLQA, EIAK…IVMG, FMDG…VGFF, and NGLL…IWVI.

It belongs to the NqrDE/RnfAE family. In terms of assembly, composed of six subunits; NqrA, NqrB, NqrC, NqrD, NqrE and NqrF.

It localises to the cell inner membrane. It carries out the reaction a ubiquinone + n Na(+)(in) + NADH + H(+) = a ubiquinol + n Na(+)(out) + NAD(+). Functionally, NQR complex catalyzes the reduction of ubiquinone-1 to ubiquinol by two successive reactions, coupled with the transport of Na(+) ions from the cytoplasm to the periplasm. NqrA to NqrE are probably involved in the second step, the conversion of ubisemiquinone to ubiquinol. This chain is Na(+)-translocating NADH-quinone reductase subunit D, found in Shewanella denitrificans (strain OS217 / ATCC BAA-1090 / DSM 15013).